Here is a 649-residue protein sequence, read N- to C-terminus: Acetyl-coenzyme A synthetase (649 aa).

CoA-binding positions include 191-194 (RGGR), Thr312, and Asn336. ATP is bound by residues 388 to 390 (GEP), 412 to 417 (DTWWQT), Asp501, and Arg516. Ser524 contributes to the CoA binding site. Arg527 is an ATP binding site. Mg(2+)-binding residues include Val538, His540, and Val543. Arg585 provides a ligand contact to CoA. Lys610 carries the N6-acetyllysine modification.

The protein belongs to the ATP-dependent AMP-binding enzyme family. Requires Mg(2+) as cofactor. Post-translationally, acetylated. Deacetylation by the SIR2-homolog deacetylase activates the enzyme.

It catalyses the reaction acetate + ATP + CoA = acetyl-CoA + AMP + diphosphate. Catalyzes the conversion of acetate into acetyl-CoA (AcCoA), an essential intermediate at the junction of anabolic and catabolic pathways. AcsA undergoes a two-step reaction. In the first half reaction, AcsA combines acetate with ATP to form acetyl-adenylate (AcAMP) intermediate. In the second half reaction, it can then transfer the acetyl group from AcAMP to the sulfhydryl group of CoA, forming the product AcCoA. The protein is Acetyl-coenzyme A synthetase of Marinobacter nauticus (strain ATCC 700491 / DSM 11845 / VT8) (Marinobacter aquaeolei).